Consider the following 644-residue polypeptide: Chaperone protein DnaK (644 aa).

Residue Thr200 is modified to Phosphothreonine; by autocatalysis. Residues 603-644 (VMAAEQAKSGGAAPGAAPGGAQQAAPDADVVDADFKEVDDKK) are disordered. Over residues 612–630 (GGAAPGAAPGGAQQAAPDA) the composition is skewed to low complexity. The span at 635 to 644 (ADFKEVDDKK) shows a compositional bias: basic and acidic residues.

It belongs to the heat shock protein 70 family.

Functionally, acts as a chaperone. The chain is Chaperone protein DnaK from Polynucleobacter asymbioticus (strain DSM 18221 / CIP 109841 / QLW-P1DMWA-1) (Polynucleobacter necessarius subsp. asymbioticus).